The chain runs to 531 residues: uncharacterized protein (531 aa).

The first 28 residues, 1-28 (MNTKGIIAKLTAGALIANLLICPANTLA), serve as a signal peptide directing secretion. 3 consecutive SLH domains span residues 29 to 85 (EKKT…QINK), 86 to 149 (QAKP…IGDL), and 150 to 210 (PTQF…SKRM). In terms of domain architecture, MurNAc-LAA spans 335–517 (IIIDPGHGGI…AAEAIYAGIL (183 aa)).

This sequence in the C-terminal section; belongs to the N-acetylmuramoyl-L-alanine amidase 3 family.

The protein resides in the secreted. Its subcellular location is the cell wall. It localises to the S-layer. This is an uncharacterized protein from Bacillus anthracis.